A 133-amino-acid polypeptide reads, in one-letter code: Large ribosomal subunit protein eL32z (133 aa).

It belongs to the eukaryotic ribosomal protein eL32 family.

The sequence is that of Large ribosomal subunit protein eL32z (RPL32A) from Arabidopsis thaliana (Mouse-ear cress).